Here is a 699-residue protein sequence, read N- to C-terminus: 4-alpha-glucanotransferase (699 aa).

The protein belongs to the disproportionating enzyme family.

It is found in the cytoplasm. It carries out the reaction Transfers a segment of a (1-&gt;4)-alpha-D-glucan to a new position in an acceptor, which may be glucose or a (1-&gt;4)-alpha-D-glucan.. The sequence is that of 4-alpha-glucanotransferase (malQ) from Haemophilus influenzae (strain ATCC 51907 / DSM 11121 / KW20 / Rd).